The following is a 556-amino-acid chain: 2-isopropylmalate synthase (556 aa).

The Pyruvate carboxyltransferase domain occupies 33–307 (PIWCSSDLRD…HPQLDFSDID (275 aa)). Mg(2+) contacts are provided by Asp42, His246, His248, and Asn282. The tract at residues 439–556 (ATSPYALASH…AVTQAEAKAA (118 aa)) is regulatory domain.

It belongs to the alpha-IPM synthase/homocitrate synthase family. LeuA type 2 subfamily. In terms of assembly, homodimer. It depends on Mg(2+) as a cofactor.

It localises to the cytoplasm. The enzyme catalyses 3-methyl-2-oxobutanoate + acetyl-CoA + H2O = (2S)-2-isopropylmalate + CoA + H(+). It functions in the pathway amino-acid biosynthesis; L-leucine biosynthesis; L-leucine from 3-methyl-2-oxobutanoate: step 1/4. Catalyzes the condensation of the acetyl group of acetyl-CoA with 3-methyl-2-oxobutanoate (2-ketoisovalerate) to form 3-carboxy-3-hydroxy-4-methylpentanoate (2-isopropylmalate). In Pseudomonas paraeruginosa (strain DSM 24068 / PA7) (Pseudomonas aeruginosa (strain PA7)), this protein is 2-isopropylmalate synthase.